We begin with the raw amino-acid sequence, 408 residues long: Aminoacylase-1 (408 aa).

H80 provides a ligand contact to Zn(2+). Residue D82 is part of the active site. Zn(2+) is bound at residue D113. E147 functions as the Proton acceptor in the catalytic mechanism. Residues E148, E175, and H373 each contribute to the Zn(2+) site.

The protein belongs to the peptidase M20A family. Homodimer. Interacts with SPHK1. It depends on Zn(2+) as a cofactor.

The protein resides in the cytoplasm. The enzyme catalyses an N-acyl-L-amino acid + H2O = an L-alpha-amino acid + a carboxylate. It catalyses the reaction N-acetyl-L-methionine + H2O = L-methionine + acetate. It carries out the reaction N-acetyl-L-glutamine + H2O = L-glutamine + acetate. In terms of biological role, catalyzes the hydrolysis of N-acetylated amino acids to acetate and free amino acids. The polypeptide is Aminoacylase-1 (Acy1) (Mus musculus (Mouse)).